The chain runs to 340 residues: Protein RecA (340 aa).

Residue 66-73 (GPESSGKT) coordinates ATP.

Belongs to the RecA family.

It is found in the cytoplasm. Functionally, can catalyze the hydrolysis of ATP in the presence of single-stranded DNA, the ATP-dependent uptake of single-stranded DNA by duplex DNA, and the ATP-dependent hybridization of homologous single-stranded DNAs. It interacts with LexA causing its activation and leading to its autocatalytic cleavage. The protein is Protein RecA of Rickettsia prowazekii (strain Madrid E).